The following is a 160-amino-acid chain: Ribosomal RNA large subunit methyltransferase H (160 aa).

Residues L76 and G108 each coordinate S-adenosyl-L-methionine.

This sequence belongs to the RNA methyltransferase RlmH family. In terms of assembly, homodimer.

It localises to the cytoplasm. It carries out the reaction pseudouridine(1915) in 23S rRNA + S-adenosyl-L-methionine = N(3)-methylpseudouridine(1915) in 23S rRNA + S-adenosyl-L-homocysteine + H(+). Its function is as follows. Specifically methylates the pseudouridine at position 1915 (m3Psi1915) in 23S rRNA. The sequence is that of Ribosomal RNA large subunit methyltransferase H from Xanthobacter autotrophicus (strain ATCC BAA-1158 / Py2).